The chain runs to 317 residues: tRNA dimethylallyltransferase (317 aa).

An ATP-binding site is contributed by 19 to 26 (GPTASGKS). 21–26 (TASGKS) contributes to the substrate binding site. The interval 44–47 (DSMQ) is interaction with substrate tRNA.

The protein belongs to the IPP transferase family. Monomer. The cofactor is Mg(2+).

It catalyses the reaction adenosine(37) in tRNA + dimethylallyl diphosphate = N(6)-dimethylallyladenosine(37) in tRNA + diphosphate. Catalyzes the transfer of a dimethylallyl group onto the adenine at position 37 in tRNAs that read codons beginning with uridine, leading to the formation of N6-(dimethylallyl)adenosine (i(6)A). The chain is tRNA dimethylallyltransferase from Methylorubrum extorquens (strain CM4 / NCIMB 13688) (Methylobacterium extorquens).